The sequence spans 255 residues: Putative enoyl-CoA hydratase/isomerase YhaR (255 aa).

Helical transmembrane passes span 96–116 (VTIAAIHGAAAGLGLSLALCA) and 126–146 (VLAMNFIGIGLVPDGGGHYLL).

It belongs to the enoyl-CoA hydratase/isomerase family.

The protein resides in the cell membrane. This Bacillus subtilis (strain 168) protein is Putative enoyl-CoA hydratase/isomerase YhaR (yhaR).